The primary structure comprises 339 residues: tRNA N6-adenosine threonylcarbamoyltransferase (339 aa).

2 residues coordinate Fe cation: His111 and His115. Residues 134–138, Asp167, Gly180, and Asn270 contribute to the substrate site; that span reads LVSGG. A Fe cation-binding site is contributed by Asp298.

It belongs to the KAE1 / TsaD family. Fe(2+) is required as a cofactor.

The protein resides in the cytoplasm. The enzyme catalyses L-threonylcarbamoyladenylate + adenosine(37) in tRNA = N(6)-L-threonylcarbamoyladenosine(37) in tRNA + AMP + H(+). Its function is as follows. Required for the formation of a threonylcarbamoyl group on adenosine at position 37 (t(6)A37) in tRNAs that read codons beginning with adenine. Is involved in the transfer of the threonylcarbamoyl moiety of threonylcarbamoyl-AMP (TC-AMP) to the N6 group of A37, together with TsaE and TsaB. TsaD likely plays a direct catalytic role in this reaction. This is tRNA N6-adenosine threonylcarbamoyltransferase from Alkalilimnicola ehrlichii (strain ATCC BAA-1101 / DSM 17681 / MLHE-1).